The sequence spans 540 residues: Chaperonin GroEL (540 aa).

ATP-binding positions include 29 to 32, 86 to 90, Gly413, 476 to 478, and Asp492; these read TLGP, DGTTT, and NAA.

The protein belongs to the chaperonin (HSP60) family. In terms of assembly, forms a cylinder of 14 subunits composed of two heptameric rings stacked back-to-back. Interacts with the co-chaperonin GroES.

The protein localises to the cytoplasm. It carries out the reaction ATP + H2O + a folded polypeptide = ADP + phosphate + an unfolded polypeptide.. Its function is as follows. Together with its co-chaperonin GroES, plays an essential role in assisting protein folding. The GroEL-GroES system forms a nano-cage that allows encapsulation of the non-native substrate proteins and provides a physical environment optimized to promote and accelerate protein folding. This chain is Chaperonin GroEL, found in Geobacillus thermodenitrificans (strain NG80-2).